The sequence spans 105 residues: U2-lycotoxin-Ls1b (105 aa).

The N-terminal stretch at 1 to 17 (MIKYVLISALLVVAVYS) is a signal peptide. A propeptide spanning residues 18-41 (FTIEDNEDALLEEAEDELDTEEER) is cleaved from the precursor. Disulfide bonds link cysteine 51–cysteine 67, cysteine 58–cysteine 97, cysteine 60–cysteine 83, and cysteine 69–cysteine 81.

The protein belongs to the neurotoxin 04 (omega-agtx) family. 01 (type I omega-agtx) subfamily. As to expression, expressed by the venom gland.

The protein resides in the secreted. Insecticidal to house crickets. It induces an excitatory slow-onset impact that leads to irreversible spastic paralysis. It also modifies human voltage-gated potassium channel Kv1.5/KCNA5. Most likely, it binds to the voltage-sensing domain of the channel, suggesting it does not block the pore but prevents its opening at physiological membrane potentials. The recombinant peptide binds to the channel in an irreversible manner and slows down the hKv1.5 current activation kinetics. It is not toxic to mice, when intracranially injected (at 0.5 ug/g mouse). This Lycosa singoriensis (Wolf spider) protein is U2-lycotoxin-Ls1b.